A 180-amino-acid chain; its full sequence is D-lyxose ketol-isomerase (180 aa).

Lys-62 serves as a coordination point for D-fructose. Residues His-75 and His-77 each coordinate Mn(2+). A D-fructose-binding site is contributed by Lys-86. Mn(2+) contacts are provided by Glu-88 and His-143. Positions 156, 166, and 175 each coordinate D-fructose.

Belongs to the D-lyxose ketol-isomerase family. In terms of assembly, homodimer; disulfide-linked. Stabilized by a disulfide bond between the two monomers of the dimeric enzyme and increased hydrophobicity at the dimer interface. The cofactor is Mn(2+).

It catalyses the reaction D-lyxose = D-xylulose. Functionally, sugar isomerase that catalyzes the reversible isomerization of D-lyxose to D-xylulose. Is highly specific for the substrate D-lyxose, showing less than 2% activity towards mannose and other substrates reported for lyxose isomerases. In Thermofilum sp. (strain ex4484_79), this protein is D-lyxose ketol-isomerase.